A 341-amino-acid polypeptide reads, in one-letter code: Very-long-chain 3-oxoacyl-CoA reductase (341 aa).

The helical transmembrane segment at valine 15 to alanine 35 threads the bilayer. NADP(+) is bound by residues valine 61, aspartate 115, asparagine 142, lysine 177, tyrosine 216, lysine 220, valine 249, and serine 251. The active-site Proton donor is tyrosine 216. Lysine 220 acts as the Lowers pKa of active site Tyr in catalysis.

This sequence belongs to the short-chain dehydrogenases/reductases (SDR) family.

The protein resides in the endoplasmic reticulum membrane. It catalyses the reaction a very-long-chain (3R)-3-hydroxyacyl-CoA + NADP(+) = a very-long-chain 3-oxoacyl-CoA + NADPH + H(+). It participates in lipid metabolism; fatty acid biosynthesis. Component of the microsomal membrane bound fatty acid elongation system, which produces the 26-carbon very long-chain fatty acids (VLCFA) from palmitate. Catalyzes the reduction of the 3-ketoacyl-CoA intermediate that is formed in each cycle of fatty acid elongation. VLCFAs serve as precursors for ceramide and sphingolipids. The sequence is that of Very-long-chain 3-oxoacyl-CoA reductase from Schizosaccharomyces pombe (strain 972 / ATCC 24843) (Fission yeast).